Here is a 200-residue protein sequence, read N- to C-terminus: Intraflagellar transport protein 43 homolog (200 aa).

Disordered regions lie at residues 56-76 (KTGKSQRKTDDDDSQETIAAP) and 175-200 (ERIDAKDQPSDSRSRNARETLISSKY). Residues 175–192 (ERIDAKDQPSDSRSRNAR) show a composition bias toward basic and acidic residues.

It belongs to the IFT43 family. As to quaternary structure, component of the IFT complex A (IFT-A) composed of at least che-11, daf-10, dyf-2, ift-139, ift-43 and ifta-1. As to expression, expressed in ciliated sensory neurons.

It is found in the cell projection. It localises to the cilium. Its function is as follows. As a component of IFT complex A (IFT-A), a complex required for retrograde ciliary transport and entry into cilia of G protein-coupled receptors (GPCRs), it is involved in ciliogenesis. In particular, may act redundantly with the intraflagellar transport protein ift-139 to regulate the transport of specific ciliary cargo proteins such as che-3 which are related to motility. This chain is Intraflagellar transport protein 43 homolog, found in Caenorhabditis elegans.